A 604-amino-acid polypeptide reads, in one-letter code: Phosphoprotein (604 aa).

Disordered stretches follow at residues 1 to 22 (MESD…RDKS) and 39 to 360 (DPQE…EESN). Residues 22-42 (STNISSALNIIEFILSTDPQE) are N0 binding. Polar residues-rich tracts occupy residues 47-61 (NDTI…SATI) and 74-90 (KVSG…SSHE). The segment covering 91–101 (CTTEAKDRNID) has biased composition (basic and acidic residues). A compositionally biased stretch (polar residues) spans 129 to 144 (GSITDSKNGTQNTENI). The span at 147–163 (NEIRKMDKDSIERKMRQ) shows a compositional bias: basic and acidic residues. The segment covering 197-207 (TPDTRSMSVVT) has biased composition (polar residues). Over residues 245-267 (KGKDWFKKSRDTDNQTSTSDHKP) the composition is skewed to basic and acidic residues. Composition is skewed to low complexity over residues 277–300 (KTTT…ETQS) and 317–328 (TSTTPPTTTPRS). Basic and acidic residues predominate over residues 330–360 (RTKESIRTNSESKPKTQKTIGKERKDTEESN). The tract at residues 400-470 (VDTASKIDFL…SLISNLKIMT (71 aa)) is multimerization. The stretch at 424-451 (LIQIQNEMLNLKADLKRMDESHRRLIEN) forms a coiled coil. Residues 450–483 (ENQREQLSLITSLISNLKIMTERGGKKDQNESNE) form a l protein binding region. An interaction with the nucleocapsid (N-RNA) region spans residues 585–604 (KSDEEVSELMDMFNEDVNNC).

The protein belongs to the respirovirus P protein family. Homotetramer. Interacts (via multimerization domain) with polymerase L; this interaction forms the polymerase L-P complex. Interacts (via N-terminus) with N0; this interaction allows P to chaperon N0 to avoid N polymerization before encapsidation. Interacts (via C-terminus) with N-RNA template; this interaction positions the polymerase on the template. Interacts with host PI4KB; this interaction allows P to recruit PI4KB to the viral factories to generate PI4P to facilitate viral replication.

Its function is as follows. Essential cofactor of the RNA polymerase L that plays a central role in the transcription and replication by forming the polymerase complex with RNA polymerase L and recruiting L to the genomic N-RNA template for RNA synthesis. Also plays a central role in the encapsidation of nascent RNA chains by forming the encapsidation complex with the nucleocapsid protein N (N-P complex). Acts as a chaperone for newly synthesized free N protein, so-called N0, allowing encapsidation of nascent RNA chains during replication. The nucleoprotein protein N prevents excessive phosphorylation of P, which leads to down-regulation of viral transcription/ replication. Participates, together with N, in the formation of viral factories (viroplasms), which are large inclusions in the host cytoplasm where replication takes place. Recruits host PI4KB and remodel the host endoplasmic reticulum membrane to form viral replication factories. The chain is Phosphoprotein (P/V/D) from Human parainfluenza 3 virus (strain Wash/47885/57) (HPIV-3).